The sequence spans 245 residues: 1-(5-phosphoribosyl)-5-[(5-phosphoribosylamino)methylideneamino] imidazole-4-carboxamide isomerase (245 aa).

The active-site Proton acceptor is the aspartate 7. Aspartate 129 functions as the Proton donor in the catalytic mechanism.

This sequence belongs to the HisA/HisF family.

It localises to the cytoplasm. It carries out the reaction 1-(5-phospho-beta-D-ribosyl)-5-[(5-phospho-beta-D-ribosylamino)methylideneamino]imidazole-4-carboxamide = 5-[(5-phospho-1-deoxy-D-ribulos-1-ylimino)methylamino]-1-(5-phospho-beta-D-ribosyl)imidazole-4-carboxamide. The protein operates within amino-acid biosynthesis; L-histidine biosynthesis; L-histidine from 5-phospho-alpha-D-ribose 1-diphosphate: step 4/9. The polypeptide is 1-(5-phosphoribosyl)-5-[(5-phosphoribosylamino)methylideneamino] imidazole-4-carboxamide isomerase (Buchnera aphidicola subsp. Cinara cedri (strain Cc)).